Here is a 299-residue protein sequence, read N- to C-terminus: Serine/threonine-protein kinase 1 (299 aa).

Positions 39–277 constitute a Protein kinase domain; it reads IATKPMFEGG…FKGLVSHPWF (239 aa). ATP is bound by residues 45–53 and lysine 66; that span reads FEGGRRNNV. The active-site Proton acceptor is aspartate 153.

Belongs to the protein kinase superfamily. Ser/Thr protein kinase family.

Its subcellular location is the virion. The protein localises to the host cytoplasm. It catalyses the reaction L-seryl-[protein] + ATP = O-phospho-L-seryl-[protein] + ADP + H(+). The enzyme catalyses L-threonyl-[protein] + ATP = O-phospho-L-threonyl-[protein] + ADP + H(+). Its function is as follows. Essential for viral replication. It may mediate the virus progression through DNA replication. This African swine fever virus (isolate Pig/Kenya/KEN-50/1950) (ASFV) protein is Serine/threonine-protein kinase 1.